The primary structure comprises 359 residues: Prostaglandin F2-alpha receptor (359 aa).

Residues 1 to 31 (MSMNNSKQLVSPAAALLSNTTCQTENRLSVF) are Extracellular-facing. Residues N4 and N19 are each glycosylated (N-linked (GlcNAc...) asparagine). Residues 32 to 54 (FSVIFMTVGILSNSLAIAILMKA) traverse the membrane as a helical segment. Residues 55 to 69 (YQRFRQKSKASFLLL) lie on the Cytoplasmic side of the membrane. The chain crosses the membrane as a helical span at residues 70–90 (ASGLVITDFFGHLINGAIAVF). At 91–109 (VYASDKEWIRFDQSNVLCS) the chain is on the extracellular side. A disulfide bridge connects residues C108 and C186. A helical membrane pass occupies residues 110–131 (IFGICMVFSGLCPLLLGSVMAI). The Cytoplasmic segment spans residues 132 to 152 (ERCIGVTKPIFHSTKITSKHV). The helical transmembrane segment at 153-175 (KMMLSGVCLFAVFIALLPILGHR) threads the bilayer. At 176-198 (DYKIQASRTWCFYNTEDIKDWED) the chain is on the extracellular side. The chain crosses the membrane as a helical span at residues 199–224 (RFYLLLFSFLGLLALGVSLLCNAITG). The Cytoplasmic segment spans residues 225–250 (ITLLRVKFKSQQHRQGRSHHLEMVIQ). Residues 251-267 (LLAIMCVSCICWSPFLV) form a helical membrane-spanning segment. Residues 268-285 (TMANIGINGNHSLETCET) are Extracellular-facing. Residues 286-307 (TLFALRMATWNQILDPWVYILL) traverse the membrane as a helical segment. The Cytoplasmic segment spans residues 308 to 359 (RKAVLKNLYKLASQCCGVHVISLHIWELSSIKNSLKVAAISESPVAEKSAST).

The protein belongs to the G-protein coupled receptor 1 family. In terms of assembly, isoform 1 can form heterodimers with isoform 5 (and probably other isoforms). As to expression, eye.

It is found in the cell membrane. Functionally, receptor for prostaglandin F2-alpha (PGF2-alpha). The activity of this receptor is mediated by G proteins which activate a phosphatidylinositol-calcium second messenger system. Initiates luteolysis in the corpus luteum. Isoforms 2 to 7 do not bind PGF2-alpha but are proposed to modulate signaling by participating in variant receptor complexes; heterodimers between isoform 1 and isoform 5 are proposed to be a receptor for prostamides including the synthetic analog bimatoprost. The protein is Prostaglandin F2-alpha receptor (PTGFR) of Homo sapiens (Human).